The chain runs to 276 residues: Ribosomal RNA small subunit methyltransferase A (276 aa).

Asn28, Leu30, Gly55, Glu77, Asp103, and Asn124 together coordinate S-adenosyl-L-methionine.

It belongs to the class I-like SAM-binding methyltransferase superfamily. rRNA adenine N(6)-methyltransferase family. RsmA subfamily.

The protein localises to the cytoplasm. It carries out the reaction adenosine(1518)/adenosine(1519) in 16S rRNA + 4 S-adenosyl-L-methionine = N(6)-dimethyladenosine(1518)/N(6)-dimethyladenosine(1519) in 16S rRNA + 4 S-adenosyl-L-homocysteine + 4 H(+). Specifically dimethylates two adjacent adenosines (A1518 and A1519) in the loop of a conserved hairpin near the 3'-end of 16S rRNA in the 30S particle. May play a critical role in biogenesis of 30S subunits. In Agrobacterium fabrum (strain C58 / ATCC 33970) (Agrobacterium tumefaciens (strain C58)), this protein is Ribosomal RNA small subunit methyltransferase A.